We begin with the raw amino-acid sequence, 139 residues long: Arsenate reductase (139 aa).

Active-site nucleophile residues include C10, C82, and C89. 2 cysteine pairs are disulfide-bonded: C10–C82 and C82–C89.

The protein belongs to the low molecular weight phosphotyrosine protein phosphatase family. Thioredoxin-coupled ArsC subfamily.

It is found in the cytoplasm. It catalyses the reaction arsenate + [thioredoxin]-dithiol + H(+) = arsenite + [thioredoxin]-disulfide + H2O. Functionally, catalyzes the reduction of arsenate [As(V)] to arsenite [As(III)]. The protein is Arsenate reductase of Halalkalibacterium halodurans (strain ATCC BAA-125 / DSM 18197 / FERM 7344 / JCM 9153 / C-125) (Bacillus halodurans).